Reading from the N-terminus, the 159-residue chain is Neuroglobin (159 aa).

The region spanning 3–151 (KLSEKDKGLI…VVSAMTRGWA (149 aa)) is the Globin domain. Residues H66 and H98 each contribute to the heme b site.

It belongs to the globin family. Monomer. Homodimers and homotetramers. Mainly monomeric but also detected as part of homodimers and homotetramers. As to expression, detected in brain, eye and gill, but not in muscle and blood (at protein level). Particularly high expression in the periventral zone of tectum opticum, with significant expression detected in white matter, preglomerular nucleus, posterior tubular nucleus, torus longitudinalis, hypothalamus, pituitary gland, posterior tuberculum, hypothalamus, synencephalon and formatio reticularis. Detected also in brain regions of the visual system, predominantly in parts of tectum opticum and torus semicircularis, area dorsalis telencephali and medulla oblongata. Strong expression observed in sensory epithelium of peripheral olfactory organ, and outer and inner nuclear layers and ganglion cell layer of retina.

The protein localises to the cytoplasm. The protein resides in the cytosol. Its subcellular location is the mitochondrion matrix. The enzyme catalyses Fe(III)-heme b-[protein] + nitric oxide + H2O = Fe(II)-heme b-[protein] + nitrite + 2 H(+). Functionally, monomeric globin with a bis-histidyl six-coordinate heme-iron atom through which it can bind dioxygen, carbon monoxide and nitric oxide. Could help transport oxygen and increase its availability to the metabolically active neuronal tissues, though its low quantity in tissues as well as its high affinity for dioxygen, which may limit its oxygen-releasing ability, argue against it. The ferrous/deoxygenated form exhibits a nitrite reductase activity and it could produce nitric oxide which in turn inhibits cellular respiration in response to hypoxia. In its ferrous/deoxygenated state, it may also exhibit GDI (Guanine nucleotide Dissociation Inhibitor) activity toward heterotrimeric G-alpha proteins, thereby regulating signal transduction to facilitate neuroprotective responses in the wake of hypoxia and associated oxidative stress. This Danio rerio (Zebrafish) protein is Neuroglobin (ngb).